We begin with the raw amino-acid sequence, 273 residues long: Large ribosomal subunit protein uL2 (273 aa).

Positions 222-273 (GMAMNPVDHPHGGGEGRNKGIQPVSPWGTPAKGYRTRSNKRTDKYIVRRRNK) are disordered. Positions 229–239 (DHPHGGGEGRN) are enriched in basic and acidic residues.

This sequence belongs to the universal ribosomal protein uL2 family. In terms of assembly, part of the 50S ribosomal subunit. Forms a bridge to the 30S subunit in the 70S ribosome.

One of the primary rRNA binding proteins. Required for association of the 30S and 50S subunits to form the 70S ribosome, for tRNA binding and peptide bond formation. It has been suggested to have peptidyltransferase activity; this is somewhat controversial. Makes several contacts with the 16S rRNA in the 70S ribosome. This chain is Large ribosomal subunit protein uL2, found in Tolumonas auensis (strain DSM 9187 / NBRC 110442 / TA 4).